Reading from the N-terminus, the 425-residue chain is Cell adhesion molecule CEACAM16 (425 aa).

The first 20 residues, 1–20 (MALTGYSWLLLSATFLNVGA), serve as a signal peptide directing secretion. N-linked (GlcNAc...) asparagine glycosylation is present at Asn-36. Ig-like C2-type domains lie at 133–218 (PTVL…INLT) and 223–309 (PERV…ASVV). Cysteines 153 and 201 form a disulfide. N-linked (GlcNAc...) asparagine glycosylation is present at Asn-216. Cys-252 and Cys-293 form a disulfide bridge. Asn-394 carries an N-linked (GlcNAc...) asparagine glycan.

It belongs to the immunoglobulin superfamily. CEA family. As to quaternary structure, homooligomer; can for homodimers and homotetramers. Interacts with TECTA and TECTB.

The protein localises to the secreted. In terms of biological role, required for proper hearing, plays a role in maintaining the integrity of the tectorial membrane. In Homo sapiens (Human), this protein is Cell adhesion molecule CEACAM16.